The primary structure comprises 592 residues: Craniofacial development protein 2 (592 aa).

A compositionally biased stretch (basic and acidic residues) spans 1-16 (MEEFDSKDISTSKDED). Disordered regions lie at residues 1-225 (MEEF…KGQS) and 499-592 (VTNE…DCNN). Positions 25–42 (HEDDINELVKEDEVDGEE) are enriched in acidic residues. 2 stretches are compositionally biased toward basic and acidic residues: residues 78-108 (SRES…RQEE) and 147-162 (KVEE…EVKL). The segment covering 175–184 (LTQQGRLSGR) has biased composition (polar residues). 4 stretches are compositionally biased toward basic and acidic residues: residues 185-207 (TSED…RRAD), 508-523 (EEAK…EKPE), 552-562 (SVFKQDEKDKP), and 580-592 (EKCD…DCNN). The interval 499 to 578 (VTNEEDATNE…SVPSLPAGSG (80 aa)) is hydrophilic.

In terms of processing, phosphorylated by CK2 (casein kinase II) in vitro. In terms of tissue distribution, expressed in liver and lung with higher expression in brain.

The protein localises to the cytoplasm. The protein resides in the nucleus. The polypeptide is Craniofacial development protein 2 (CFDP2) (Bos taurus (Bovine)).